The following is a 55-amino-acid chain: Large ribosomal subunit protein bL33 (55 aa).

It belongs to the bacterial ribosomal protein bL33 family.

This Polaromonas sp. (strain JS666 / ATCC BAA-500) protein is Large ribosomal subunit protein bL33.